Reading from the N-terminus, the 347-residue chain is EIKETFKYINTVVSCLVFVLGIIGNSTLLRIIYKNKCMRNGPNILIASLALGDLLHIIIDIPISVYKLLAEDWPFGVEMCKLVPFIQKASVGITVLSLCALSIDRYRAVASWSRIKGIGVPKWTAVEIVLIWVISVVLAVPEAIAFDMITMEYRGKDLRICLLHPTQKTSFMMFYKQAKDWWLFSFYFCLPLAITALFYTLMTCEMLRKKSGMQIALNDHLKQRREVAKTVFCLVLVFALCWLPLHLSRILKLTIYDQKDPNRCELLSFFLVMDYIGINMASLNSCINPIALYLVSKRFQNCFKSCLCCWCQSKDLLSLEERQSCLKFKANDHGYDNFRSSNKYSSS.

Residues 1-7 are Extracellular-facing; sequence EIKETFK. Residues 8-32 form a helical membrane-spanning segment; sequence YINTVVSCLVFVLGIIGNSTLLRII. The Cytoplasmic segment spans residues 33 to 43; sequence YKNKCMRNGPN. A helical transmembrane segment spans residues 44–69; it reads ILIASLALGDLLHIIIDIPISVYKLL. Residues 70–81 are Extracellular-facing; the sequence is AEDWPFGVEMCK. C80 and C161 form a disulfide bridge. Residues 82–103 traverse the membrane as a helical segment; the sequence is LVPFIQKASVGITVLSLCALSI. Over 104-124 the chain is Cytoplasmic; it reads DRYRAVASWSRIKGIGVPKWT. The chain crosses the membrane as a helical span at residues 125–149; that stretch reads AVEIVLIWVISVVLAVPEAIAFDMI. At 150 to 177 the chain is on the extracellular side; sequence TMEYRGKDLRICLLHPTQKTSFMMFYKQ. Residues 178 to 202 form a helical membrane-spanning segment; that stretch reads AKDWWLFSFYFCLPLAITALFYTLM. The Cytoplasmic segment spans residues 203 to 230; that stretch reads TCEMLRKKSGMQIALNDHLKQRREVAKT. A helical transmembrane segment spans residues 231-256; the sequence is VFCLVLVFALCWLPLHLSRILKLTIY. The Extracellular segment spans residues 257 to 268; the sequence is DQKDPNRCELLS. The chain crosses the membrane as a helical span at residues 269-295; the sequence is FFLVMDYIGINMASLNSCINPIALYLV. The Cytoplasmic segment spans residues 296-347; the sequence is SKRFQNCFKSCLCCWCQSKDLLSLEERQSCLKFKANDHGYDNFRSSNKYSSS. 2 S-palmitoyl cysteine lipidation sites follow: C309 and C311.

It belongs to the G-protein coupled receptor 1 family. Endothelin receptor subfamily. EDNRB sub-subfamily.

The protein resides in the cell membrane. Functionally, non-specific receptor for endothelin 1, 2, and 3. Mediates its action by association with G proteins that activate a phosphatidylinositol-calcium second messenger system. The sequence is that of Endothelin receptor type B (EDNRB) from Coturnix japonica (Japanese quail).